The sequence spans 886 residues: Alanine--tRNA ligase (886 aa).

Zn(2+)-binding residues include H564, H568, C676, and H680.

It belongs to the class-II aminoacyl-tRNA synthetase family. Requires Zn(2+) as cofactor.

It localises to the cytoplasm. The catalysed reaction is tRNA(Ala) + L-alanine + ATP = L-alanyl-tRNA(Ala) + AMP + diphosphate. Its function is as follows. Catalyzes the attachment of alanine to tRNA(Ala) in a two-step reaction: alanine is first activated by ATP to form Ala-AMP and then transferred to the acceptor end of tRNA(Ala). Also edits incorrectly charged Ser-tRNA(Ala) and Gly-tRNA(Ala) via its editing domain. The chain is Alanine--tRNA ligase from Bartonella bacilliformis.